The primary structure comprises 166 residues: Lipoprotein signal peptidase (166 aa).

3 helical membrane passes run 12–32 (LPIA…KYLV), 66–86 (MEGW…LWLW), and 101–121 (AMII…GYVI). Catalysis depends on residues Asp-122 and Asp-140. A helical transmembrane segment spans residues 132–152 (SFAVFNLADSFITVGAGAIIL).

This sequence belongs to the peptidase A8 family.

Its subcellular location is the cell inner membrane. It catalyses the reaction Release of signal peptides from bacterial membrane prolipoproteins. Hydrolyzes -Xaa-Yaa-Zaa-|-(S,diacylglyceryl)Cys-, in which Xaa is hydrophobic (preferably Leu), and Yaa (Ala or Ser) and Zaa (Gly or Ala) have small, neutral side chains.. The protein operates within protein modification; lipoprotein biosynthesis (signal peptide cleavage). This protein specifically catalyzes the removal of signal peptides from prolipoproteins. The sequence is that of Lipoprotein signal peptidase from Sinorhizobium fredii (strain NBRC 101917 / NGR234).